Consider the following 145-residue polypeptide: Large ribosomal subunit protein uL11 (145 aa).

This sequence belongs to the universal ribosomal protein uL11 family. As to quaternary structure, part of the ribosomal stalk of the 50S ribosomal subunit. Interacts with L10 and the large rRNA to form the base of the stalk. L10 forms an elongated spine to which L12 dimers bind in a sequential fashion forming a multimeric L10(L12)X complex. Post-translationally, one or more lysine residues are methylated.

In terms of biological role, forms part of the ribosomal stalk which helps the ribosome interact with GTP-bound translation factors. The protein is Large ribosomal subunit protein uL11 of Rickettsia peacockii (strain Rustic).